Consider the following 429-residue polypeptide: Enolase (429 aa).

Glutamine 164 is a (2R)-2-phosphoglycerate binding site. Glutamate 206 serves as the catalytic Proton donor. Aspartate 243, glutamate 286, and aspartate 313 together coordinate Mg(2+). (2R)-2-phosphoglycerate-binding residues include lysine 338, arginine 367, serine 368, and lysine 389. The active-site Proton acceptor is the lysine 338.

Belongs to the enolase family. Mg(2+) is required as a cofactor.

The protein resides in the cytoplasm. It localises to the secreted. Its subcellular location is the cell surface. The catalysed reaction is (2R)-2-phosphoglycerate = phosphoenolpyruvate + H2O. It functions in the pathway carbohydrate degradation; glycolysis; pyruvate from D-glyceraldehyde 3-phosphate: step 4/5. In terms of biological role, catalyzes the reversible conversion of 2-phosphoglycerate (2-PG) into phosphoenolpyruvate (PEP). It is essential for the degradation of carbohydrates via glycolysis. This is Enolase from Thermosipho melanesiensis (strain DSM 12029 / CIP 104789 / BI429).